A 568-amino-acid polypeptide reads, in one-letter code: Phosphoprotein (568 aa).

Disordered stretches follow at residues 1 to 22 (MDQD…PGGR) and 40 to 320 (PTDI…GIGE). Over residues 7–20 (ILKEDSEVERKAPG) the composition is skewed to basic and acidic residues. The N0 binding stretch occupies residues 33 to 41 (DAVLSSEPT). Polar residues predominate over residues 50–60 (LHNTINTSQGP). At serine 68 the chain carries Phosphoserine; by host. The segment covering 83-101 (RSGEESRVSGRTSKPEAEA) has biased composition (basic and acidic residues). The residue at position 125 (serine 125) is a Phosphoserine; by host. A compositionally biased stretch (basic and acidic residues) spans 150-168 (GIEDENREMAAHPDKRGED). The span at 191–206 (ASNNGRSMEPGSSHSA) shows a compositional bias: polar residues. Phosphoserine; by host occurs at positions 192, 249, and 257. Residues 344–411 (FESSRDASYV…SFRDIYKRFS (68 aa)) form a multimerization region. Residues 364–429 (YAEMTFNVCG…LLMSNLSTLH (66 aa)) are a coiled coil. The segment at 412-445 (EYQKEQNSLLMSNLSTLHIITDRGGKTDNTDSLT) is l protein binding. 2 positions are modified to phosphoserine; by host: serine 447 and serine 449. Residues 479–568 (DLIREDEFRD…VEEDIESLTN (90 aa)) are interaction with the nucleocapsid (N-RNA).

This sequence belongs to the respirovirus P protein family. In terms of assembly, homotetramer. Interacts (via multimerization domain) with polymerase L; this interaction forms the polymerase complex. Interacts (via N-terminus) with N0; this interaction allows P to chaperon N0 before encapsidation and form the N-P complex. Interacts (via C-terminus) with N-RNA template; this interaction positions the polymerase on the template. Post-translationally, phosphorylated by PKC/PRKCZ, and other unknown kinases. Phosphorylation is necessary for viral transcription and replication. The N-terminus contains the majority of phosphorylated sites. Ser-249 is the major site of phosphorylation, but is not necessary for most functions.

The protein resides in the host cytoplasm. Essential cofactor of the RNA polymerase L that plays a central role in the transcription and replication by forming the polymerase complex with RNA polymerase L and recruiting L to the genomic N-RNA template for RNA synthesis. Also plays a central role in the encapsidation of nascent RNA chains by forming the encapsidation complex with the nucleocapsid protein N (N-P complex). Acts as a chaperone for newly synthesized free N protein, so-called N0, allowing encapsidation of nascent RNA chains during replication. The nucleoprotein protein N prevents excessive phosphorylation of P, which leads to down-regulation of viral transcription/ replication. Participates, together with N, in the formation of viral factories (viroplasms), which are large inclusions in the host cytoplasm where replication takes place. Recruits host PI4KB and remodel the host endoplasmic reticulum membrane to form viral replication factories. The protein is Phosphoprotein (P/V/C) of Sendai virus (strain 6/94) (SeV).